We begin with the raw amino-acid sequence, 236 residues long: Uridylate kinase (236 aa).

An ATP-binding site is contributed by 10 to 13 (KLSG). Gly-52 is a UMP binding site. The ATP site is built by Gly-53 and Arg-57. UMP is bound by residues Asp-72 and 133–140 (TGNPFFTT). ATP contacts are provided by Thr-160, Tyr-166, and Asp-169.

This sequence belongs to the UMP kinase family. As to quaternary structure, homohexamer.

It localises to the cytoplasm. The catalysed reaction is UMP + ATP = UDP + ADP. It participates in pyrimidine metabolism; CTP biosynthesis via de novo pathway; UDP from UMP (UMPK route): step 1/1. Inhibited by UTP. Its function is as follows. Catalyzes the reversible phosphorylation of UMP to UDP. The protein is Uridylate kinase of Cupriavidus necator (strain ATCC 17699 / DSM 428 / KCTC 22496 / NCIMB 10442 / H16 / Stanier 337) (Ralstonia eutropha).